Reading from the N-terminus, the 447-residue chain is Argininosuccinate synthase (447 aa).

Residues 12–20 (AYSGGLDTS) and alanine 39 contribute to the ATP site. Residues tyrosine 92 and serine 97 each coordinate L-citrulline. Residue glycine 122 participates in ATP binding. L-aspartate is bound by residues threonine 124, asparagine 128, and aspartate 129. Asparagine 128 lines the L-citrulline pocket. L-citrulline-binding residues include arginine 132, serine 182, serine 191, glutamate 267, and tyrosine 279.

Belongs to the argininosuccinate synthase family. Type 1 subfamily. Homotetramer.

It localises to the cytoplasm. The enzyme catalyses L-citrulline + L-aspartate + ATP = 2-(N(omega)-L-arginino)succinate + AMP + diphosphate + H(+). Its pathway is amino-acid biosynthesis; L-arginine biosynthesis; L-arginine from L-ornithine and carbamoyl phosphate: step 2/3. The sequence is that of Argininosuccinate synthase from Sulfurovum sp. (strain NBC37-1).